The chain runs to 275 residues: Large ribosomal subunit protein uL2c (275 aa).

The segment at 225–249 is disordered; that stretch reads PVDHPHGGGEGRAPIGRKKPTTPWG.

Belongs to the universal ribosomal protein uL2 family. Part of the 50S ribosomal subunit.

The protein resides in the plastid. This is Large ribosomal subunit protein uL2c (rpl2) from Cuscuta reflexa (Southern Asian dodder).